Consider the following 156-residue polypeptide: Small ribosomal subunit protein uS7 (156 aa).

This sequence belongs to the universal ribosomal protein uS7 family. As to quaternary structure, part of the 30S ribosomal subunit. Contacts proteins S9 and S11.

Functionally, one of the primary rRNA binding proteins, it binds directly to 16S rRNA where it nucleates assembly of the head domain of the 30S subunit. Is located at the subunit interface close to the decoding center, probably blocks exit of the E-site tRNA. This Clostridium acetobutylicum (strain ATCC 824 / DSM 792 / JCM 1419 / IAM 19013 / LMG 5710 / NBRC 13948 / NRRL B-527 / VKM B-1787 / 2291 / W) protein is Small ribosomal subunit protein uS7.